The primary structure comprises 868 residues: Leucine--tRNA ligase (868 aa).

The 'HIGH' region signature appears at 42–52 (PYPSGKLHMGH). Positions 627–631 (KMSKS) match the 'KMSKS' region motif. Residue Lys630 participates in ATP binding.

It belongs to the class-I aminoacyl-tRNA synthetase family.

The protein resides in the cytoplasm. The catalysed reaction is tRNA(Leu) + L-leucine + ATP = L-leucyl-tRNA(Leu) + AMP + diphosphate. The polypeptide is Leucine--tRNA ligase (Pseudomonas syringae pv. tomato (strain ATCC BAA-871 / DC3000)).